The primary structure comprises 1082 residues: Sodium/potassium exporting P-type ATPase 2 (1082 aa).

At 1-75 (MSSINTNVAE…GANTLGDGDK (75 aa)) the chain is on the cytoplasmic side. A helical membrane pass occupies residues 76-96 (ISLTKIIAHQVCNAMILVLII). Topologically, residues 97–98 (SM) are extracellular. Residues 99–119 (VIALAIKDWISGGVIGFVVLI) traverse the membrane as a helical segment. Residues 120 to 308 (NISVGFVQEY…VGTPLQRKLS (189 aa)) are Cytoplasmic-facing. Residues 309-329 (WLAIFLFWGCRYFCNYCNGIP) form a helical membrane-spanning segment. Residues 330 to 336 (KNRVNKE) lie on the Extracellular side of the membrane. A helical membrane pass occupies residues 337–357 (VAIYAICVALSMIPSALIVVL). Over 358 to 807 (TITMAVGAQV…RMSSNIQKFV (450 aa)) the chain is Cytoplasmic. The active-site 4-aspartylphosphate intermediate is the Asp393. Residues Asp393 and Thr395 each coordinate Mg(2+). 9 residues coordinate ATP: Thr395, Glu499, Lys552, Arg604, Thr664, Gly665, Asp666, Arg723, and Lys729. A Mg(2+)-binding site is contributed by Asp748. Position 751 (Asn751) interacts with ATP. The chain crosses the membrane as a helical span at residues 808 to 828 (LQLLAENVAQALYLMVGLAFI). Residues 829–832 (DDSG) lie on the Extracellular side of the membrane. A helical transmembrane segment spans residues 833 to 853 (LSVFPLSPVEVLWILVVTSCF). Topologically, residues 854 to 884 (PAMDLGQERASDDILEESPNSTIFTWEVIID) are cytoplasmic. Residues 885-905 (MIVYGFWMAVCCLVCFVIIVY) traverse the membrane as a helical segment. The Extracellular portion of the chain corresponds to 906-935 (GEGDPYLGVNCNKSSSSNSDVCELVFRGRS). A helical transmembrane segment spans residues 936–956 (ASFATMTWCALILAWECIHPY). The Cytoplasmic segment spans residues 957-983 (NSLFYMRQDTDHPWWKQTVIDLWDNQF). A helical transmembrane segment spans residues 984–1004 (LFWSVAIGFISVFPVVYIPVI). At 1005 to 1007 (NTK) the chain is on the extracellular side. The chain crosses the membrane as a helical span at residues 1008 to 1028 (VFLHGPIGYEWGLAVGFSILF). Topologically, residues 1029–1082 (LAGSELWKWIKRIHKRKANKKAKNPEYELERSDPFKKYASFSRSNTMDRPELMV) are cytoplasmic.

Belongs to the cation transport ATPase (P-type) (TC 3.A.3) family. Type IID subfamily. Mg(2+) serves as cofactor. In terms of processing, the active site is phosphorylated in presence of sodium or potassium and in conditions of higher pH. Not phosphorylated in presence of calcium ions.

It localises to the cell membrane. It carries out the reaction Na(+)(in) + ATP + H2O = Na(+)(out) + ADP + phosphate + H(+). It catalyses the reaction K(+)(in) + ATP + H2O = K(+)(out) + ADP + phosphate + H(+). Catalyzes the hydrolysis of ATP coupled with the export of sodium and potassium from the cell. May be an inefficient sodium exporter. May transport other cations such as lithium. Sodium/potassium efflux ATPases are involved in salt tolerance and maintaining the membrane potential across the plasma membrane in high salinity (Na+) or alkaline (K+) environments. The protein is Sodium/potassium exporting P-type ATPase 2 of Schwanniomyces occidentalis (Yeast).